The primary structure comprises 230 residues: Potassium/proton antiporter CemA (230 aa).

4 helical membrane-spanning segments follow: residues 7 to 27 (LPSLLYLVFIVLLPWGVSFSF), 106 to 126 (IILHFSTNIICLAILSGFFFL), 145 to 165 (LNDSIKAFFILLVTDFFVGFH), and 181 to 201 (LGWAPNELIFTIFVCSFPVIL).

This sequence belongs to the CemA family.

The protein localises to the plastid. It localises to the chloroplast inner membrane. It carries out the reaction K(+)(in) + H(+)(out) = K(+)(out) + H(+)(in). Contributes to K(+)/H(+) antiport activity by supporting proton efflux to control proton extrusion and homeostasis in chloroplasts in a light-dependent manner to modulate photosynthesis. Prevents excessive induction of non-photochemical quenching (NPQ) under continuous-light conditions. Indirectly promotes efficient inorganic carbon uptake into chloroplasts. This chain is Potassium/proton antiporter CemA, found in Lolium perenne (Perennial ryegrass).